The following is a 242-amino-acid chain: Probable derlin-1 homolog (242 aa).

The Cytoplasmic segment spans residues 1-18 (MDGVKEWFNSIPPVSRYM). A helical transmembrane segment spans residues 19–39 (FAIFLGIPVLAAMHLISFNYL). The Lumenal portion of the chain corresponds to 40–98 (YLDFTFTFKHFHLWRLITAPCIISSLGPMFLFNLIFFYQYTTRLESLNYAGKSDDYLFC). A helical transmembrane segment spans residues 99–119 (IIFISICNIIFGLIFEYYFLG). Residues 120–140 (TMTIMSLIYIYSRMNPTGTSN) lie on the Cytoplasmic side of the membrane. The chain crosses the membrane as a helical span at residues 141–161 (FYGFFSFKTIYLPWVFLVAHF). Residues 162-167 (LQTGHP) lie on the Lumenal side of the membrane. A helical membrane pass occupies residues 168-188 (PYSDFLAIVSGHIFFYLTDIY). Over 189–242 (PRANGVPALIKTPKFITNIFNKGDRNPNNVRRDPRTGRPIQEGGYNWGQGHALG) the chain is Cytoplasmic. Basic and acidic residues predominate over residues 214 to 224 (NPNNVRRDPRT). Residues 214–242 (NPNNVRRDPRTGRPIQEGGYNWGQGHALG) are disordered. Residues 233–242 (YNWGQGHALG) show a composition bias toward gly residues.

It belongs to the derlin family.

Its subcellular location is the endoplasmic reticulum membrane. Its function is as follows. May be involved in the degradation process of specific misfolded endoplasmic reticulum (ER) luminal proteins. May also involved in endoplasmic reticulum stress-induced pre-emptive quality control, a mechanism that selectively attenuates the translocation of newly synthesized proteins into the endoplasmic reticulum and reroutes them to the cytosol for proteasomal degradation. The protein is Probable derlin-1 homolog of Dictyostelium discoideum (Social amoeba).